Reading from the N-terminus, the 546-residue chain is 2-isopropylmalate synthase (546 aa).

Positions 8-271 (ILIFDTTLRD…NSFFGRSSDS (264 aa)) constitute a Pyruvate carboxyltransferase domain. The Mn(2+) site is built by Asp17, His208, His210, and Asn244. Residues 408-546 (QLSHVQVSCG…EKKVFSNPKN (139 aa)) form a regulatory domain region.

It belongs to the alpha-IPM synthase/homocitrate synthase family. LeuA type 1 subfamily. In terms of assembly, homodimer. Mn(2+) serves as cofactor.

It is found in the cytoplasm. The enzyme catalyses 3-methyl-2-oxobutanoate + acetyl-CoA + H2O = (2S)-2-isopropylmalate + CoA + H(+). Its pathway is amino-acid biosynthesis; L-leucine biosynthesis; L-leucine from 3-methyl-2-oxobutanoate: step 1/4. Functionally, catalyzes the condensation of the acetyl group of acetyl-CoA with 3-methyl-2-oxobutanoate (2-ketoisovalerate) to form 3-carboxy-3-hydroxy-4-methylpentanoate (2-isopropylmalate). In Prochlorococcus marinus (strain MIT 9515), this protein is 2-isopropylmalate synthase.